Here is a 344-residue protein sequence, read N- to C-terminus: Protein RecA (344 aa).

Residue 65 to 72 (GPESSGKT) participates in ATP binding.

It belongs to the RecA family.

It localises to the cytoplasm. Functionally, can catalyze the hydrolysis of ATP in the presence of single-stranded DNA, the ATP-dependent uptake of single-stranded DNA by duplex DNA, and the ATP-dependent hybridization of homologous single-stranded DNAs. It interacts with LexA causing its activation and leading to its autocatalytic cleavage. In Rubrobacter xylanophilus (strain DSM 9941 / JCM 11954 / NBRC 16129 / PRD-1), this protein is Protein RecA.